Reading from the N-terminus, the 227-residue chain is Large ribosomal subunit protein uL3 (227 aa).

Gln-158 carries the N5-methylglutamine modification.

This sequence belongs to the universal ribosomal protein uL3 family. In terms of assembly, part of the 50S ribosomal subunit. Forms a cluster with proteins L14 and L19. Methylated by PrmB.

Its function is as follows. One of the primary rRNA binding proteins, it binds directly near the 3'-end of the 23S rRNA, where it nucleates assembly of the 50S subunit. This chain is Large ribosomal subunit protein uL3, found in Polaromonas sp. (strain JS666 / ATCC BAA-500).